Here is an 82-residue protein sequence, read N- to C-terminus: uncharacterized protein (82 aa).

This is an uncharacterized protein from Orgyia pseudotsugata (Douglas-fir tussock moth).